The sequence spans 237 residues: LexA repressor (237 aa).

Positions 26 to 46 form a DNA-binding region, H-T-H motif; that stretch reads FDEMKEALDLRSKSGIHRLIT. Positions 84–110 are disordered; sequence GFSPSVIEGGAQPKPSSRDLAPARSSG. Residues Ser158 and Lys196 each act as for autocatalytic cleavage activity in the active site.

This sequence belongs to the peptidase S24 family. Homodimer.

It carries out the reaction Hydrolysis of Ala-|-Gly bond in repressor LexA.. Its function is as follows. Represses a number of genes involved in the response to DNA damage (SOS response), including recA and lexA. In the presence of single-stranded DNA, RecA interacts with LexA causing an autocatalytic cleavage which disrupts the DNA-binding part of LexA, leading to derepression of the SOS regulon and eventually DNA repair. This is LexA repressor from Parvibaculum lavamentivorans (strain DS-1 / DSM 13023 / NCIMB 13966).